We begin with the raw amino-acid sequence, 147 residues long: Phospholipase A2 inhibitor subunit A (147 aa).

The 82-residue stretch at Glu-62 to Phe-143 folds into the C-type lectin domain. Disulfide bonds link Cys-64–Cys-141 and Cys-119–Cys-133. Residue Asn-103 is glycosylated (N-linked (GlcNAc...) asparagine).

The protein belongs to the alpha-type phospholipase A2 inhibitor family. As to quaternary structure, homo- or heterotrimer; homotrimer of PLI-A chains, two PLI-A and one PLI-B chains, one PLI-A and two PLI-B chains, and homotrimer of PLI-B chains (with a ratio of 1:3:3:1). In terms of tissue distribution, expressed by the liver.

Its subcellular location is the secreted. Its function is as follows. PLI binds directly phospholipase A2 in the presence or absence of calcium. Inhibitory activity of the PLI-A homotrimer is more specific than that of the PLI-B homotrimer. This chain is Phospholipase A2 inhibitor subunit A, found in Protobothrops flavoviridis (Habu).